The chain runs to 275 residues: 2,3,4,5-tetrahydropyridine-2,6-dicarboxylate N-succinyltransferase (275 aa).

Substrate-binding residues include arginine 104 and aspartate 141.

Belongs to the transferase hexapeptide repeat family. Homotrimer.

The protein resides in the cytoplasm. It catalyses the reaction (S)-2,3,4,5-tetrahydrodipicolinate + succinyl-CoA + H2O = (S)-2-succinylamino-6-oxoheptanedioate + CoA. It functions in the pathway amino-acid biosynthesis; L-lysine biosynthesis via DAP pathway; LL-2,6-diaminopimelate from (S)-tetrahydrodipicolinate (succinylase route): step 1/3. The polypeptide is 2,3,4,5-tetrahydropyridine-2,6-dicarboxylate N-succinyltransferase (Aeromonas hydrophila subsp. hydrophila (strain ATCC 7966 / DSM 30187 / BCRC 13018 / CCUG 14551 / JCM 1027 / KCTC 2358 / NCIMB 9240 / NCTC 8049)).